We begin with the raw amino-acid sequence, 207 residues long: Small ribosomal subunit protein uS4 (207 aa).

Positions 31–54 (KCKLDSKPGQHGRTSGARTSDYGN) are disordered. The segment covering 42 to 53 (GRTSGARTSDYG) has biased composition (polar residues). The S4 RNA-binding domain maps to 97–160 (SRLDNVVYRM…KKQVRIAEAL (64 aa)).

Belongs to the universal ribosomal protein uS4 family. In terms of assembly, part of the 30S ribosomal subunit. Contacts protein S5. The interaction surface between S4 and S5 is involved in control of translational fidelity.

In terms of biological role, one of the primary rRNA binding proteins, it binds directly to 16S rRNA where it nucleates assembly of the body of the 30S subunit. Its function is as follows. With S5 and S12 plays an important role in translational accuracy. This is Small ribosomal subunit protein uS4 from Cupriavidus metallidurans (strain ATCC 43123 / DSM 2839 / NBRC 102507 / CH34) (Ralstonia metallidurans).